Reading from the N-terminus, the 482-residue chain is Putative metallophosphoesterase F40B5.2 (482 aa).

4 consecutive transmembrane segments (helical) span residues 15-35 (MNLK…SIAI), 129-149 (ALMM…YIFL), 156-176 (IAIT…FLLI), and 205-225 (CYHI…GLYT). Residues aspartate 256, histidine 258, aspartate 288, asparagine 319, histidine 421, and histidine 423 each contribute to the a divalent metal cation site.

It belongs to the metallophosphoesterase superfamily. LOC643853 family.

The protein resides in the membrane. In Caenorhabditis elegans, this protein is Putative metallophosphoesterase F40B5.2.